The chain runs to 279 residues: Replication factor A protein 2 (279 aa).

The interval 26–47 (GAGFNEYDQSSQPSVDRQQGAG) is disordered. Positions 32 to 46 (YDQSSQPSVDRQQGA) are enriched in polar residues. Positions 80 to 140 (VTFVGVLRNI…GNIKIFSGKI (61 aa)) form a DNA-binding region, OB.

Belongs to the replication factor A protein 2 family. As to quaternary structure, heterotrimer of 68, 30, and 12 kDa chains. In terms of processing, phosphorylated in a cell cycle-dependent manner. Hypophosphorylated in G1, becomes phosphorylated at the G1/S boundary, it is maintained in this state through the M phase.

The protein resides in the nucleus. In terms of biological role, binds to single-stranded sequences. The sequence is that of Replication factor A protein 2 (ssb2) from Schizosaccharomyces pombe (strain 972 / ATCC 24843) (Fission yeast).